A 403-amino-acid chain; its full sequence is Tryptophan synthase beta chain 1 (403 aa).

Residue Lys93 is modified to N6-(pyridoxal phosphate)lysine.

Belongs to the TrpB family. As to quaternary structure, tetramer of two alpha and two beta chains. Pyridoxal 5'-phosphate is required as a cofactor.

It catalyses the reaction (1S,2R)-1-C-(indol-3-yl)glycerol 3-phosphate + L-serine = D-glyceraldehyde 3-phosphate + L-tryptophan + H2O. It functions in the pathway amino-acid biosynthesis; L-tryptophan biosynthesis; L-tryptophan from chorismate: step 5/5. The beta subunit is responsible for the synthesis of L-tryptophan from indole and L-serine. This Methanosarcina acetivorans (strain ATCC 35395 / DSM 2834 / JCM 12185 / C2A) protein is Tryptophan synthase beta chain 1 (trpB1).